Reading from the N-terminus, the 627-residue chain is 1-deoxy-D-xylulose-5-phosphate synthase (627 aa).

Thiamine diphosphate is bound by residues H75 and 116 to 118 (AHS). Position 147 (D147) interacts with Mg(2+). Thiamine diphosphate-binding positions include 148 to 149 (GA), N177, Y284, and E366. N177 contacts Mg(2+).

The protein belongs to the transketolase family. DXPS subfamily. As to quaternary structure, homodimer. The cofactor is Mg(2+). Requires thiamine diphosphate as cofactor.

The enzyme catalyses D-glyceraldehyde 3-phosphate + pyruvate + H(+) = 1-deoxy-D-xylulose 5-phosphate + CO2. The protein operates within metabolic intermediate biosynthesis; 1-deoxy-D-xylulose 5-phosphate biosynthesis; 1-deoxy-D-xylulose 5-phosphate from D-glyceraldehyde 3-phosphate and pyruvate: step 1/1. In terms of biological role, catalyzes the acyloin condensation reaction between C atoms 2 and 3 of pyruvate and glyceraldehyde 3-phosphate to yield 1-deoxy-D-xylulose-5-phosphate (DXP). In Bordetella petrii (strain ATCC BAA-461 / DSM 12804 / CCUG 43448), this protein is 1-deoxy-D-xylulose-5-phosphate synthase.